The following is a 525-amino-acid chain: GMP synthase [glutamine-hydrolyzing] (525 aa).

The 199-residue stretch at 8–206 (PLLILDFGSQ…VVDICKASTD (199 aa)) folds into the Glutamine amidotransferase type-1 domain. Cys85 acts as the Nucleophile in catalysis. Active-site residues include His180 and Glu182. A GMPS ATP-PPase domain is found at 207-400 (WTPEHIIDEA…LGLPHDMVYR (194 aa)). Position 234 to 240 (234 to 240 (SGGVDSS)) interacts with ATP.

As to quaternary structure, homodimer.

The enzyme catalyses XMP + L-glutamine + ATP + H2O = GMP + L-glutamate + AMP + diphosphate + 2 H(+). It functions in the pathway purine metabolism; GMP biosynthesis; GMP from XMP (L-Gln route): step 1/1. Catalyzes the synthesis of GMP from XMP. In Legionella pneumophila (strain Paris), this protein is GMP synthase [glutamine-hydrolyzing].